Here is a 586-residue protein sequence, read N- to C-terminus: Arginine--tRNA ligase (586 aa).

The short motif at 133-143 (ANPTGPLNIVS) is the 'HIGH' region element.

The protein belongs to the class-I aminoacyl-tRNA synthetase family. Monomer.

The protein resides in the cytoplasm. The catalysed reaction is tRNA(Arg) + L-arginine + ATP = L-arginyl-tRNA(Arg) + AMP + diphosphate. This Leptospira borgpetersenii serovar Hardjo-bovis (strain JB197) protein is Arginine--tRNA ligase.